The sequence spans 256 residues: POU domain class 2-associating factor 1 (256 aa).

The disordered stretch occupies residues 1–24 (MLWQKSTAPEQAPAPPRPYQGVRV). The region spanning 16–38 (PRPYQGVRVKEPVKELLRRKRGH) is the OCA domain.

This sequence belongs to the POU2AF family. Interacts with POU2F1/OCT1 and POU2F2/OCT2; the interaction increases POU2F1 and POU2F2 transactivation activity. In terms of processing, ubiquitinated; mediated by SIAH1 or SIAH2 and leading to its subsequent proteasomal degradation. In terms of tissue distribution, B-cell specific.

It localises to the nucleus. In terms of biological role, transcriptional coactivator that specifically associates with either POU2F1/OCT1 or POU2F2/OCT2. It boosts the POU2F1/OCT1 mediated promoter activity and to a lesser extent, that of POU2F2/OCT2. It recognizes the POU domains of POU2F1/OCT1 and POU2F2/OCT2. It is essential for the response of B-cells to antigens and required for the formation of germinal centers. Regulates IL6 expression in B cells as POU2F2/OCT2 coactivator. The polypeptide is POU domain class 2-associating factor 1 (Mus musculus (Mouse)).